The sequence spans 946 residues: RIPOR family member 3 (946 aa).

Residues Ser9, Ser24, and Ser340 each carry the phosphoserine modification. At Thr345 the chain carries Phosphothreonine. 2 positions are modified to phosphoserine: Ser351 and Ser384. A disordered region spans residues Gly390 to Ala512. Residues Ser437 to Pro446 show a composition bias toward basic and acidic residues. Residues Ser478 to Asn495 are compositionally biased toward polar residues. A compositionally biased stretch (basic and acidic residues) spans Gly496–Gly508.

It belongs to the RIPOR family.

The sequence is that of RIPOR family member 3 from Homo sapiens (Human).